We begin with the raw amino-acid sequence, 264 residues long: S-adenosylmethionine decarboxylase proenzyme (264 aa).

Residue Ser-112 is the Schiff-base intermediate with substrate; via pyruvic acid of the active site. Pyruvic acid (Ser); by autocatalysis is present on Ser-112. His-117 acts as the Proton acceptor; for processing activity in catalysis. Cys-140 acts as the Proton donor; for catalytic activity in catalysis.

This sequence belongs to the prokaryotic AdoMetDC family. Type 2 subfamily. In terms of assembly, heterooctamer of four alpha and four beta chains arranged as a tetramer of alpha/beta heterodimers. Pyruvate serves as cofactor. In terms of processing, is synthesized initially as an inactive proenzyme. Formation of the active enzyme involves a self-maturation process in which the active site pyruvoyl group is generated from an internal serine residue via an autocatalytic post-translational modification. Two non-identical subunits are generated from the proenzyme in this reaction, and the pyruvate is formed at the N-terminus of the alpha chain, which is derived from the carboxyl end of the proenzyme. The post-translation cleavage follows an unusual pathway, termed non-hydrolytic serinolysis, in which the side chain hydroxyl group of the serine supplies its oxygen atom to form the C-terminus of the beta chain, while the remainder of the serine residue undergoes an oxidative deamination to produce ammonia and the pyruvoyl group blocking the N-terminus of the alpha chain.

It catalyses the reaction S-adenosyl-L-methionine + H(+) = S-adenosyl 3-(methylsulfanyl)propylamine + CO2. It functions in the pathway amine and polyamine biosynthesis; S-adenosylmethioninamine biosynthesis; S-adenosylmethioninamine from S-adenosyl-L-methionine: step 1/1. Its function is as follows. Catalyzes the decarboxylation of S-adenosylmethionine to S-adenosylmethioninamine (dcAdoMet), the propylamine donor required for the synthesis of the polyamines spermine and spermidine from the diamine putrescine. This Serratia proteamaculans (strain 568) protein is S-adenosylmethionine decarboxylase proenzyme.